Consider the following 211-residue polypeptide: Small ribosomal subunit protein uS3 (211 aa).

A KH type-2 domain is found at 16–85 (IDEYFKTKLV…NPQIEVKQVE (70 aa)).

The protein belongs to the universal ribosomal protein uS3 family. In terms of assembly, part of the 30S ribosomal subunit.

Its function is as follows. Binds the lower part of the 30S subunit head. The polypeptide is Small ribosomal subunit protein uS3 (Methanococcus maripaludis (strain DSM 14266 / JCM 13030 / NBRC 101832 / S2 / LL)).